We begin with the raw amino-acid sequence, 996 residues long: Receptor-like protein kinase HSL1 (996 aa).

Residues 1-15 (MYLLFLFLLFPTVFS) form the signal peptide. The Extracellular portion of the chain corresponds to 16–618 (LNQDGFILQQ…ENEAKKRGYV (603 aa)). LRR repeat units follow at residues 59 to 83 (FSSV…ICRL), 84 to 107 (SNLA…IAAC), 109 to 131 (SLQT…LADI), 133 to 154 (TLVH…SFGK), 155 to 178 (FENL…FLGN), 179 to 203 (ISTL…EFGN), 205 to 228 (TNLE…LGQL), 229 to 252 (SKLV…LGGL), 253 to 276 (TNVV…LGNL), 278 to 299 (SLRL…ELCR), 300 to 323 (VPLE…IALS), 325 to 347 (NLYE…LGLN), 348 to 371 (SPLR…LCAK), 373 to 395 (ELEE…LADC), 396 to 419 (RSLT…FWGL), 421 to 443 (HVNL…IGGA), 444 to 467 (SNLS…IGSL), 468 to 491 (DNLN…LMSL), 493 to 515 (ELGT…IKSW), 516 to 539 (KKLN…IGSL), 541 to 562 (VLNY…SLQS), and 563 to 586 (LKLN…LAKD). 2 N-linked (GlcNAc...) asparagine glycosylation sites follow: asparagine 93 and asparagine 97. Asparagine 143, asparagine 178, asparagine 186, and asparagine 203 each carry an N-linked (GlcNAc...) asparagine glycan. Residue asparagine 262 is glycosylated (N-linked (GlcNAc...) asparagine). N-linked (GlcNAc...) asparagine glycosylation is found at asparagine 429 and asparagine 445. An N-linked (GlcNAc...) asparagine glycan is attached at asparagine 569. The helical transmembrane segment at 619 to 639 (WLLRSIFVLAAMVLLAGVAWF) threads the bilayer. At 640-996 (YFKYRTFKKA…EDTSDQGSIA (357 aa)) the chain is on the cytoplasmic side. The Protein kinase domain maps to 676 to 962 (LDEDNVIGAG…RRVVKMLQEI (287 aa)). Residues 682-690 (IGAGASGKV) and lysine 704 each bind ATP. Residues tyrosine 764 and tyrosine 802 each carry the phosphotyrosine modification. Residue aspartate 815 is the Proton acceptor of the active site. Serine 851 is subject to Phosphoserine. Phosphotyrosine is present on residues tyrosine 859 and tyrosine 866. Phosphothreonine is present on threonine 867. The disordered stretch occupies residues 967–996 (EDSLHKIRDDKDGKLTPYYNEDTSDQGSIA). The span at 968 to 980 (DSLHKIRDDKDGK) shows a compositional bias: basic and acidic residues.

This sequence belongs to the protein kinase superfamily. Ser/Thr protein kinase family.

Its subcellular location is the cell membrane. The enzyme catalyses L-seryl-[protein] + ATP = O-phospho-L-seryl-[protein] + ADP + H(+). It catalyses the reaction L-threonyl-[protein] + ATP = O-phospho-L-threonyl-[protein] + ADP + H(+). This Arabidopsis thaliana (Mouse-ear cress) protein is Receptor-like protein kinase HSL1 (HSL1).